The following is a 173-amino-acid chain: MELVVGRIARAHGVTGELSVEVRTDDPDERFAVGSVLTGRLPRGGGSRRFTVESVREHSGRLLIRFAGVSDRDAADALRGTLFMVDTTDLPPIEDPDEFYDHQLEGLAVRTLDGAAVGTVSEVLHTPGGELLSVRGSERREILVPFVSAIVTSISLADKVIEIDPPEGLLDLS.

The region spanning D95 to L169 is the PRC barrel domain.

Belongs to the RimM family. In terms of assembly, binds ribosomal protein uS19.

Its subcellular location is the cytoplasm. An accessory protein needed during the final step in the assembly of 30S ribosomal subunit, possibly for assembly of the head region. Essential for efficient processing of 16S rRNA. May be needed both before and after RbfA during the maturation of 16S rRNA. It has affinity for free ribosomal 30S subunits but not for 70S ribosomes. The protein is Ribosome maturation factor RimM of Mycobacteroides abscessus (strain ATCC 19977 / DSM 44196 / CCUG 20993 / CIP 104536 / JCM 13569 / NCTC 13031 / TMC 1543 / L948) (Mycobacterium abscessus).